Here is a 211-residue protein sequence, read N- to C-terminus: 5,6-dimethylbenzimidazole synthase (211 aa).

Residues 22-26 (RRDVR), S50, L99, and S158 each bind FMN.

Belongs to the BluB family. In terms of assembly, homooctamer.

It carries out the reaction FMNH2 + O2 = dialurate + 5,6-dimethylbenzimidazole + D-erythrose 4-phosphate + H(+). In terms of biological role, involved in the biosynthesis of cobalamin (vitamin B12). Catalyzes the oxidative fragmentation and contraction of the isoalloxazine heterocycle and the cleavage of the ribityl tail of FMNH(2) to form 5,6-dimethylbenzimidazole (DMB) and D-erythrose 4-phosphate (E4P). NAD(P)H is only required initially to reduce FMN and oxygen drives the oxidative fragmentation. The protein is 5,6-dimethylbenzimidazole synthase of Rhodospirillum rubrum (strain ATCC 11170 / ATH 1.1.1 / DSM 467 / LMG 4362 / NCIMB 8255 / S1).